The primary structure comprises 872 residues: Protein SCD5 (872 aa).

Disordered stretches follow at residues 1–98 (MSFD…SGGD) and 209–239 (PKPRPILSSENHEEVYEEVEDDDSSAKTGDQ). Positions 48-85 (FWDQGSRSHSDTTLSYRNNHSNTAADNATNVSSPQKDN) are enriched in polar residues. The KKRVK motif; Required for interaction with GLC7, endocytosis and actin cytoskeleton organization signature appears at 272 to 276 (KKVRF). 2 disordered regions span residues 280 to 321 (ITFQ…LDFT) and 338 to 358 (SGLVSSLPSEQQETEEEKKVL). Polar residues-rich tracts occupy residues 284-296 (DPPNLNQESSNNS) and 339-348 (GLVSSLPSEQ). A run of 12 repeats spans residues 405–424 (QLPLEPLKPTATGSANHLVR), 439–458 (QTGLQPLKPTATGSANYLMR), 479–498 (SGGLQPLKPTATGSANYLMK), 534–545 (SPNITLPQSNQQ), 564–575 (SPQHTYSNNVRI), 593–604 (PPQNTLPQHQQS), 608–619 (SPQNTIPQHQRS), 623–634 (SPQNTFTQNQPI), 636–647 (SPQHTYSNNQAT), 650–661 (SPQNTYTNNQQQ), 683–694 (PPQHMYSNVQKQ), and 717–728 (SPQNAANSYFQS). Positions 405 to 448 (QLPLEPLKPTATGSANHLVREEYNQGLHPSNGAIQTGLQPLKPT) are 3 X 20 AA approximate repeats. 2 positions are modified to phosphothreonine; by PRK1: Thr-416 and Thr-450. The interval 460–489 (HMEQPQSIKPSSTPETVTNSGGLQPLKPTA) is disordered. Residues 462–481 (EQPQSIKPSSTPETVTNSGG) show a composition bias toward polar residues. Thr-490 bears the Phosphothreonine; by PRK1 mark. 2 disordered regions span residues 516 to 571 (QFTN…TYSN) and 591 to 620 (AFPPQNTLPQHQQSHLLSPQNTIPQHQRSQ). Residues 534–728 (SPNITLPQSN…QNAANSYFQS (195 aa)) are 9 X 12 AA approximate repeats. The residue at position 564 (Ser-564) is a Phosphoserine. Over residues 594-620 (PQNTLPQHQQSHLLSPQNTIPQHQRSQ) the composition is skewed to polar residues. Positions 649–681 (ISPQNTYTNNQQQPQHLPPPPPPRAQQQQQGAI) are disordered. A compositionally biased stretch (low complexity) spans 651–663 (PQNTYTNNQQQPQ). A compositionally biased stretch (polar residues) spans 697–727 (LVPTQPSYTNSPSIQSPNFLSPQNAANSYFQ). Disordered stretches follow at residues 697 to 758 (LVPT…ISSF) and 806 to 838 (NSDIHSQPNKPNYGMLGQQVHQQQQQQQQQFPF). Residues 728 to 745 (SLLSSSPSPNPTPSNAST) show a composition bias toward low complexity. Polar residues-rich tracts occupy residues 746-758 (VNGNNASNGISSF) and 806-815 (NSDIHSQPNK). Residues 823-835 (QQVHQQQQQQQQQ) are compositionally biased toward low complexity.

As to quaternary structure, interacts (via KKVRF motif) with phosphatase GLC7. In terms of processing, phosphorylation by PRK1 and/or AKL1 on Thr-416, Thr-450 and Thr-490 of repeats 1-1, 1-2 and/or 1-3 negatively regulates SCD5 function in endocytosis and actin cytoskeleton organization.

Its subcellular location is the membrane. Regulates both fluid phase and receptor-mediated endocytosis. Involved in vesicular transport at a late stage of the secretory pathway. Regulates actin cytoskeleton organization. The polypeptide is Protein SCD5 (SCD5) (Saccharomyces cerevisiae (strain ATCC 204508 / S288c) (Baker's yeast)).